Reading from the N-terminus, the 142-residue chain is Hemoglobin subunit alpha-A (142 aa).

The region spanning 2-142 is the Globin domain; it reads VLSAADKTNV…VGAVLTAKYR (141 aa). Residue His-59 coordinates O2. Heme b is bound at residue His-88.

Belongs to the globin family. Heterotetramer of two alpha chains and two beta chains. Red blood cells.

Involved in oxygen transport from the lung to the various peripheral tissues. This is Hemoglobin subunit alpha-A (HBAA) from Anas platyrhynchos platyrhynchos (Northern mallard).